The following is a 378-amino-acid chain: Spermidine/putrescine import ATP-binding protein PotA (378 aa).

Residues 18 to 248 (VLLSGISKSF…PKNLFVAGFI (231 aa)) form the ABC transporter domain. 50–57 (GPSGCGKT) contributes to the ATP binding site.

The protein belongs to the ABC transporter superfamily. Spermidine/putrescine importer (TC 3.A.1.11.1) family. As to quaternary structure, the complex is composed of two ATP-binding proteins (PotA), two transmembrane proteins (PotB and PotC) and a solute-binding protein (PotD).

The protein localises to the cell inner membrane. It carries out the reaction ATP + H2O + polyamine-[polyamine-binding protein]Side 1 = ADP + phosphate + polyamineSide 2 + [polyamine-binding protein]Side 1.. Functionally, part of the ABC transporter complex PotABCD involved in spermidine/putrescine import. Responsible for energy coupling to the transport system. The sequence is that of Spermidine/putrescine import ATP-binding protein PotA from Salmonella choleraesuis (strain SC-B67).